The primary structure comprises 115 residues: Non-specific lipid-transfer protein 4.3 (115 aa).

An N-terminal signal peptide occupies residues 1–25 (MARAAATQLVLVAMVAAMLLVATDA). 4 disulfides stabilise this stretch: Cys-29–Cys-77, Cys-39–Cys-54, Cys-55–Cys-97, and Cys-75–Cys-111.

The protein belongs to the plant LTP family.

Functionally, plant non-specific lipid-transfer proteins transfer phospholipids as well as galactolipids across membranes. May play a role in wax or cutin deposition in the cell walls of expanding epidermal cells and certain secretory tissues. The polypeptide is Non-specific lipid-transfer protein 4.3 (LTP4.3) (Hordeum vulgare (Barley)).